The primary structure comprises 489 residues: Tyrosine-protein phosphatase MSG5 (489 aa).

Residues 1–18 show a composition bias toward basic and acidic residues; it reads MQFHSDKQHLDSKTDIDF. Positions 1 to 30 are disordered; sequence MQFHSDKQHLDSKTDIDFKPNSPRSLQNRN. Residues Ser22, Ser98, and Ser151 each carry the phosphoserine modification. At Thr178 the chain carries Phosphothreonine. Positions 233–375 constitute a Tyrosine-protein phosphatase domain; sequence GPLLVLPPNL…LMEWGTMLSK (143 aa). Cys319 functions as the Phosphocysteine intermediate in the catalytic mechanism. Disordered regions lie at residues 375 to 401 and 419 to 489; these read KNSP…VSST and LSSS…MFLP. A compositionally biased stretch (low complexity) spans 419-450; sequence LSSSPNDSSVNSSEVTPRTPATLTGARTALAT. Basic and acidic residues predominate over residues 451 to 460; sequence ERGEDDEHCK.

The protein belongs to the protein-tyrosine phosphatase family. Non-receptor class dual specificity subfamily.

The enzyme catalyses O-phospho-L-tyrosyl-[protein] + H2O = L-tyrosyl-[protein] + phosphate. Functionally, dual specificity phosphatase that dephosphorylates MAP kinase FUS3 on both a Tyr and a Ser or Thr. Has a role in adaptation to pheromone. The chain is Tyrosine-protein phosphatase MSG5 (MSG5) from Saccharomyces cerevisiae (strain ATCC 204508 / S288c) (Baker's yeast).